The chain runs to 146 residues: Large ribosomal subunit protein uL15 (146 aa).

Over residues 1–13 (MKLHELKAAEGSR) the composition is skewed to basic and acidic residues. The tract at residues 1 to 56 (MKLHELKAAEGSRRVRNRVGRGAATGNGKTSGRGQKGQKARSGGKLRPGFEGGQLP) is disordered. A compositionally biased stretch (gly residues) spans 23–35 (AATGNGKTSGRGQ).

The protein belongs to the universal ribosomal protein uL15 family. Part of the 50S ribosomal subunit.

Its function is as follows. Binds to the 23S rRNA. This is Large ribosomal subunit protein uL15 from Staphylococcus epidermidis (strain ATCC 35984 / DSM 28319 / BCRC 17069 / CCUG 31568 / BM 3577 / RP62A).